A 436-amino-acid chain; its full sequence is 3-ketoacyl-CoA thiolase (436 aa).

The active-site Acyl-thioester intermediate is C99. Catalysis depends on proton acceptor residues H392 and C422.

The protein belongs to the thiolase-like superfamily. Thiolase family. In terms of assembly, heterotetramer of two alpha chains (FadJ) and two beta chains (FadI).

Its subcellular location is the cytoplasm. It catalyses the reaction an acyl-CoA + acetyl-CoA = a 3-oxoacyl-CoA + CoA. The protein operates within lipid metabolism; fatty acid beta-oxidation. Functionally, catalyzes the final step of fatty acid oxidation in which acetyl-CoA is released and the CoA ester of a fatty acid two carbons shorter is formed. This chain is 3-ketoacyl-CoA thiolase, found in Shewanella putrefaciens (strain CN-32 / ATCC BAA-453).